A 332-amino-acid chain; its full sequence is Malate dehydrogenase (332 aa).

Residues 11–16 (GAGNVG) and aspartate 35 contribute to the NAD(+) site. Arginine 97 and arginine 103 together coordinate substrate. NAD(+)-binding positions include asparagine 110 and 133-135 (VTN). Substrate-binding residues include asparagine 135 and arginine 166. Histidine 190 functions as the Proton acceptor in the catalytic mechanism.

The protein belongs to the LDH/MDH superfamily. MDH type 3 family.

It carries out the reaction (S)-malate + NAD(+) = oxaloacetate + NADH + H(+). Catalyzes the reversible oxidation of malate to oxaloacetate. This chain is Malate dehydrogenase, found in Hydrogenobaculum sp. (strain Y04AAS1).